The following is a 332-amino-acid chain: Putative peptide import ATP-binding protein BruAb2_1033 (332 aa).

The 251-residue stretch at 11–261 (LEVSNLSVDF…PLHPYTEGLL (251 aa)) folds into the ABC transporter domain. ATP is bound at residue 47 to 54 (GESGSGKS).

It belongs to the ABC transporter superfamily. In terms of assembly, the complex is composed of two ATP-binding proteins (BruAb2_1033 and BruAb2_1034), two transmembrane proteins (BruAb2_1031 and BruAb2_1032) and a solute-binding protein (BruAb2_1030).

It localises to the cell inner membrane. In terms of biological role, probably part of an ABC transporter complex that could be involved in peptide import. Probably responsible for energy coupling to the transport system. This chain is Putative peptide import ATP-binding protein BruAb2_1033, found in Brucella abortus biovar 1 (strain 9-941).